Here is a 407-residue protein sequence, read N- to C-terminus: Phospholipid-transporting ATPase accessory subunit CDC50 (407 aa).

A disordered region spans residues Met1–Phe33. At Met1–Lys48 the chain is on the cytoplasmic side. The span at Asp15–Lys25 shows a compositional bias: basic and acidic residues. Residues Leu49–Thr69 traverse the membrane as a helical segment. Topologically, residues Tyr70–Gly359 are extracellular. The cysteines at positions 85 and 139 are disulfide-linked. N-linked (GlcNAc...) asparagine glycans are attached at residues Asn131 and Asn189. Cys193 and Cys210 are disulfide-bonded. N-linked (GlcNAc...) asparagine glycans are attached at residues Asn219, Asn232, Asn241, and Asn314. A helical membrane pass occupies residues Ile360–Phe380. Residues Phe381–Ser407 are Cytoplasmic-facing.

Belongs to the CDC50/LEM3 family. In terms of assembly, component of a flippase complex consisting of DNF1 and CDC50. Interacts with DNF1; the interaction is direct.

Its subcellular location is the cell membrane. Accessory component of a P4-ATPase flippase complex which catalyzes the hydrolysis of ATP coupled to the transport of phosphatidylcholine and phosphatidylserine from the lumen to the cytosolic leaflet of membranes and ensures the maintenance of asymmetric distribution of phospholipids. In Chaetomium thermophilum (strain DSM 1495 / CBS 144.50 / IMI 039719) (Thermochaetoides thermophila), this protein is Phospholipid-transporting ATPase accessory subunit CDC50.